The following is a 368-amino-acid chain: 3-isopropylmalate dehydrogenase (368 aa).

NAD(+) is bound at residue 79–91 (GPEWGTSSTVRPE). Substrate-binding residues include Arg98, Arg108, Arg137, and Asp226. The Mg(2+) site is built by Asp226, Asp251, and Asp255. NAD(+) is bound at residue 291-303 (GSAPDISGKGIVN).

The protein belongs to the isocitrate and isopropylmalate dehydrogenases family. Homodimer. The cofactor is Mg(2+). Mn(2+) is required as a cofactor.

It localises to the cytoplasm. It carries out the reaction (2R,3S)-3-isopropylmalate + NAD(+) = 4-methyl-2-oxopentanoate + CO2 + NADH. Its pathway is amino-acid biosynthesis; L-leucine biosynthesis; L-leucine from 3-methyl-2-oxobutanoate: step 3/4. Its function is as follows. Catalyzes the oxidation of 3-carboxy-2-hydroxy-4-methylpentanoate (3-isopropylmalate) to 3-carboxy-4-methyl-2-oxopentanoate. The product decarboxylates to 4-methyl-2 oxopentanoate. This chain is 3-isopropylmalate dehydrogenase (leu-1), found in Neurospora crassa (strain ATCC 24698 / 74-OR23-1A / CBS 708.71 / DSM 1257 / FGSC 987).